The primary structure comprises 330 residues: Putative quinone oxidoreductase YhfP (330 aa).

NADP(+) is bound by residues Tyr-45, 160–163, 182–184, Arg-202, Leu-248, Ile-262, Ser-273, and Asn-320; these read TGGV and TGN.

This sequence belongs to the zinc-containing alcohol dehydrogenase family. Quinone oxidoreductase subfamily. Homodimer, or homotetramer.

It is found in the cytoplasm. This chain is Putative quinone oxidoreductase YhfP (yhfP), found in Bacillus subtilis (strain 168).